The chain runs to 397 residues: Succinate--CoA ligase [ADP-forming] subunit beta (397 aa).

Residues 9 to 254 form the ATP-grasp domain; that stretch reads KALLKSFGAP…KSEEDEKEIQ (246 aa). ATP contacts are provided by residues K46, 53 to 55, E109, A112, and E117; that span reads GRG. Mg(2+) is bound by residues N209 and D223. Substrate is bound by residues N274 and 331-333; that span reads GIM.

The protein belongs to the succinate/malate CoA ligase beta subunit family. Heterotetramer of two alpha and two beta subunits. Mg(2+) is required as a cofactor.

The enzyme catalyses succinate + ATP + CoA = succinyl-CoA + ADP + phosphate. The catalysed reaction is GTP + succinate + CoA = succinyl-CoA + GDP + phosphate. The protein operates within carbohydrate metabolism; tricarboxylic acid cycle; succinate from succinyl-CoA (ligase route): step 1/1. Its function is as follows. Succinyl-CoA synthetase functions in the citric acid cycle (TCA), coupling the hydrolysis of succinyl-CoA to the synthesis of either ATP or GTP and thus represents the only step of substrate-level phosphorylation in the TCA. The beta subunit provides nucleotide specificity of the enzyme and binds the substrate succinate, while the binding sites for coenzyme A and phosphate are found in the alpha subunit. In Rhizobium rhizogenes (strain K84 / ATCC BAA-868) (Agrobacterium radiobacter), this protein is Succinate--CoA ligase [ADP-forming] subunit beta.